The primary structure comprises 251 residues: Probable transcriptional regulatory protein Franean1_5147 (251 aa).

This sequence belongs to the TACO1 family.

It is found in the cytoplasm. In Parafrankia sp. (strain EAN1pec), this protein is Probable transcriptional regulatory protein Franean1_5147.